A 955-amino-acid polypeptide reads, in one-letter code: uncharacterized protein (955 aa).

Positions 23 to 90 constitute an Importin N-terminal domain; sequence ANNYLEEFQK…RNSLLQLFLA (68 aa).

This is an uncharacterized protein from Schizosaccharomyces pombe (strain 972 / ATCC 24843) (Fission yeast).